A 143-amino-acid polypeptide reads, in one-letter code: Mannitol-specific phosphotransferase enzyme IIA component (143 aa).

Positions 1–142 (MKLLKNNIYI…DKVLEFLAKH (142 aa)) constitute a PTS EIIA type-2 domain. Histidine 61 serves as the catalytic Tele-phosphohistidine intermediate. Residue histidine 61 is modified to Phosphohistidine; by HPr.

The protein resides in the cytoplasm. Its function is as follows. The phosphoenolpyruvate-dependent sugar phosphotransferase system (sugar PTS), a major carbohydrate active transport system, catalyzes the phosphorylation of incoming sugar substrates concomitantly with their translocation across the cell membrane. The enzyme II CmtAB PTS system is involved in D-mannitol transport. The protein is Mannitol-specific phosphotransferase enzyme IIA component (mtlF) of Mycoplasma pneumoniae (strain ATCC 29342 / M129 / Subtype 1) (Mycoplasmoides pneumoniae).